The sequence spans 157 residues: 2-C-methyl-D-erythritol 2,4-cyclodiphosphate synthase (157 aa).

A divalent metal cation contacts are provided by Asp8 and His10. Residues 8 to 10 (DVH) and 34 to 35 (HS) contribute to the 4-CDP-2-C-methyl-D-erythritol 2-phosphate site. His42 contributes to the a divalent metal cation binding site. Residues 56–58 (DIG), 61–65 (FPDTD), 100–106 (AQAPKML), 132–135 (TTTE), Phe139, and Arg142 each bind 4-CDP-2-C-methyl-D-erythritol 2-phosphate.

It belongs to the IspF family. In terms of assembly, homotrimer. The cofactor is a divalent metal cation.

It catalyses the reaction 4-CDP-2-C-methyl-D-erythritol 2-phosphate = 2-C-methyl-D-erythritol 2,4-cyclic diphosphate + CMP. Its pathway is isoprenoid biosynthesis; isopentenyl diphosphate biosynthesis via DXP pathway; isopentenyl diphosphate from 1-deoxy-D-xylulose 5-phosphate: step 4/6. In terms of biological role, involved in the biosynthesis of isopentenyl diphosphate (IPP) and dimethylallyl diphosphate (DMAPP), two major building blocks of isoprenoid compounds. Catalyzes the conversion of 4-diphosphocytidyl-2-C-methyl-D-erythritol 2-phosphate (CDP-ME2P) to 2-C-methyl-D-erythritol 2,4-cyclodiphosphate (ME-CPP) with a corresponding release of cytidine 5-monophosphate (CMP). This chain is 2-C-methyl-D-erythritol 2,4-cyclodiphosphate synthase, found in Photorhabdus laumondii subsp. laumondii (strain DSM 15139 / CIP 105565 / TT01) (Photorhabdus luminescens subsp. laumondii).